We begin with the raw amino-acid sequence, 141 residues long: Large ribosomal subunit protein uL14 (141 aa).

It belongs to the universal ribosomal protein uL14 family.

This chain is Large ribosomal subunit protein uL14 (RPL23), found in Tetrahymena thermophila (strain SB210).